We begin with the raw amino-acid sequence, 310 residues long: Acetylglutamate kinase (310 aa).

Substrate contacts are provided by residues 74 to 75 (GG), Arg-96, and Asn-201.

This sequence belongs to the acetylglutamate kinase family. ArgB subfamily.

The protein resides in the cytoplasm. It catalyses the reaction N-acetyl-L-glutamate + ATP = N-acetyl-L-glutamyl 5-phosphate + ADP. It participates in amino-acid biosynthesis; L-arginine biosynthesis; N(2)-acetyl-L-ornithine from L-glutamate: step 2/4. Its function is as follows. Catalyzes the ATP-dependent phosphorylation of N-acetyl-L-glutamate. This is Acetylglutamate kinase from Arthrobacter sp. (strain FB24).